The chain runs to 1502 residues: E3 ubiquitin-protein ligase UPL4 (1502 aa).

Basic and acidic residues predominate over residues 1-21; the sequence is MENRGQKRMEVVEELPADKRA. The interval 1–107 is disordered; the sequence is MENRGQKRME…DYQRQRSSGD (107 aa). Residues 22 to 46 show a composition bias toward polar residues; sequence CNSQDFRPSTSGSSVQAQANDTNPG. Residues 67–90 are compositionally biased toward acidic residues; that stretch reads DEEEQEEQDKEDSDYGSCDSDEED. Basic and acidic residues predominate over residues 91–107; that stretch reads PRQRVLQDYQRQRSSGD. 4 ARM repeats span residues 143–183, 186–226, 228–265, and 267–306; these read EESL…YLCD, PPSV…KISR, EPVA…NICK, and LSSE…KIAD. Residues 833–881 are disordered; sequence CQAESSSPMEIDSESSDASQLQGSQVEDQTQLPGQQNASSSETSSEKED. A compositionally biased stretch (polar residues) spans 849 to 875; it reads DASQLQGSQVEDQTQLPGQQNASSSET. Positions 1022 to 1096 are K-box; that stretch reads RPVPHSEFVS…IRHHPQHLSS (75 aa). The HECT domain occupies 1128 to 1502; it reads KMMELYGNQK…TEGQGSFHLS (375 aa). Catalysis depends on Cys1469, which acts as the Glycyl thioester intermediate.

It belongs to the UPL family. K-HECT subfamily.

The catalysed reaction is S-ubiquitinyl-[E2 ubiquitin-conjugating enzyme]-L-cysteine + [acceptor protein]-L-lysine = [E2 ubiquitin-conjugating enzyme]-L-cysteine + N(6)-ubiquitinyl-[acceptor protein]-L-lysine.. The protein operates within protein modification; protein ubiquitination. Functionally, probable E3 ubiquitin-protein ligase which mediates ubiquitination and subsequent proteasomal degradation of target proteins. The sequence is that of E3 ubiquitin-protein ligase UPL4 (UPL4) from Arabidopsis thaliana (Mouse-ear cress).